Here is a 344-residue protein sequence, read N- to C-terminus: MSSSTDARRQEVLRAIVADYIASQSPVGSKALLERYQLGVSSATIRNDMAVLEAEGLIAQEHASSGRVPTQKGYRQFVDTLHDVKPLSKAERRAMLTFLEGGVDLEDVLRRSVQLLAQVTKQAAVVQLPNLKVSRVKHCEVVALSPVRLLLVLITDNGRVDQRNVELDDVIDPEQTHRLRDILNTALEGKTLTEASVELAALVDDSPADIRPHLLKAATTLIETLVEQPSDRLIMAGTSNLTRVALTEGLPSIIEALEEQVVVLKLLARVPDLGNVSVSIGEENEADELRQTSVVATRYGFGTGSEAAALGGLGVVGPTYMDYSGTISKVSAVARYVSEILAGE.

It belongs to the HrcA family.

Its function is as follows. Negative regulator of class I heat shock genes (grpE-dnaK-dnaJ and groELS operons). Prevents heat-shock induction of these operons. This Corynebacterium aurimucosum (strain ATCC 700975 / DSM 44827 / CIP 107346 / CN-1) (Corynebacterium nigricans) protein is Heat-inducible transcription repressor HrcA.